We begin with the raw amino-acid sequence, 122 residues long: MIQMESLLKAADNSGARQVQCIKVLGGSKRRYAGIGDIVKVSVKDAIPRGRVKKGEVYNAVVVRSKRGVRRADGSQIRFDGNAAVLLNNNLQPIGTRVFGPVTRELRNERFMRIISLAPEVL.

The protein belongs to the universal ribosomal protein uL14 family. As to quaternary structure, part of the 50S ribosomal subunit. Forms a cluster with proteins L3 and L19. In the 70S ribosome, L14 and L19 interact and together make contacts with the 16S rRNA in bridges B5 and B8.

Binds to 23S rRNA. Forms part of two intersubunit bridges in the 70S ribosome. The chain is Large ribosomal subunit protein uL14 from Halorhodospira halophila (strain DSM 244 / SL1) (Ectothiorhodospira halophila (strain DSM 244 / SL1)).